The sequence spans 283 residues: Polyamine aminopropyltransferase (283 aa).

The PABS domain maps to 2-237; sequence ELWYTEEHTD…GHWLFGFASK (236 aa). Residue Gln31 participates in S-methyl-5'-thioadenosine binding. Residues His62 and Asp86 each coordinate spermidine. S-methyl-5'-thioadenosine is bound by residues Glu106 and 137–138; that span reads DG. Residue Asp155 is the Proton acceptor of the active site. 155–158 is a spermidine binding site; it reads DSTD. Pro162 contacts S-methyl-5'-thioadenosine.

Belongs to the spermidine/spermine synthase family. Homodimer or homotetramer.

The protein resides in the cytoplasm. It catalyses the reaction S-adenosyl 3-(methylsulfanyl)propylamine + putrescine = S-methyl-5'-thioadenosine + spermidine + H(+). The protein operates within amine and polyamine biosynthesis; spermidine biosynthesis; spermidine from putrescine: step 1/1. Functionally, catalyzes the irreversible transfer of a propylamine group from the amino donor S-adenosylmethioninamine (decarboxy-AdoMet) to putrescine (1,4-diaminobutane) to yield spermidine. The polypeptide is Polyamine aminopropyltransferase (Clostridium perfringens (strain ATCC 13124 / DSM 756 / JCM 1290 / NCIMB 6125 / NCTC 8237 / Type A)).